A 209-amino-acid polypeptide reads, in one-letter code: Chalcone isomerase-like protein 2 (209 aa).

Belongs to the chalcone isomerase family. In terms of assembly, component an active demethylxanthohumol (DMX) biosynthetic metabolon in glandular trichomes (lupulin glands) that encompasses a chalcone synthase (CHS) and a membrane-bound prenyltransferase. Interacts with CHS_H1 and PT1L. Mostly expressed in glandular trichomes (lupulin glands), and, to a lower extent, in cones, cones bracts, leaves, stems and roots.

It localises to the cytoplasm. The enzyme catalyses a chalcone = a flavanone.. It participates in secondary metabolite biosynthesis; flavonoid biosynthesis. In terms of biological role, involved in the biosynthesis of prenylated phenolics natural products which contribute to the bitter taste of beer and display broad biological activities. Involved in anthocyanin biosynthesis. Polyketide binding proteins (PBP) which promotes the catalytic activities of CHS_H1 and PT1L and triggers demethylxanthohumol (DMX) production. The chain is Chalcone isomerase-like protein 2 from Humulus lupulus (European hop).